Consider the following 1362-residue polypeptide: Bromodomain-containing protein 4 (1362 aa).

Positions 1–58 are disordered; that stretch reads MSAESGPGTRLRNLPVMGDGLETSQMSTTQAQAQPQPANAASTNPPPPETSNPNKPKR. Residues 23 to 43 show a composition bias toward low complexity; the sequence is TSQMSTTQAQAQPQPANAAST. The region spanning 58 to 164 is the Bromo 1 domain; that stretch reads RQTNQLQYLL…KLFLQKINEL (107 aa). Residue Lys99 forms a Glycyl lysine isopeptide (Lys-Gly) (interchain with G-Cter in SUMO2) linkage. Disordered stretches follow at residues 174–229, 242–352, and 463–615; these read VQAK…PAVT, VPPQ…KVSE, and EPVV…YEEK. A compositionally biased stretch (low complexity) spans 197 to 211; sequence PNTTQASTPPQTQTP. Pro residues-rich tracts occupy residues 212–227 and 243–266; these read QPNP…PFPA and PPQP…PAPQ. Residues 320–336 are compositionally biased toward basic and acidic residues; it reads QRRESSRPVKPPKKDVP. The 110-residue stretch at 348-457 folds into the Bromo 2 domain; the sequence is SKVSEQLKCC…DVFEMRFAKM (110 aa). At Ser470 the chain carries Phosphoserine. A compositionally biased stretch (low complexity) spans 478 to 497; that stretch reads KVVAPPSSSDSSSDSSSDSD. Phosphoserine; by CK2 is present on residues Ser484, Ser488, Ser492, Ser494, Ser498, Ser499, and Ser503. Residues 484-503 are NPS region; that stretch reads SSSDSSSDSSSDSDSSTDDS. Positions 524-579 are BID region; the sequence is QLAALSQPQQNKPKKKEKDKKEKKKEKHKRKEEVEENKKSKAKEPPPKKTKKNNSS. The segment covering 535 to 553 has biased composition (basic residues); the sequence is KPKKKEKDKKEKKKEKHKR. The segment covering 554–570 has biased composition (basic and acidic residues); it reads KEEVEENKKSKAKEPPP. A Glycyl lysine isopeptide (Lys-Gly) (interchain with G-Cter in SUMO2) cross-link involves residue Lys585. The region spanning 600 to 682 is the NET domain; it reads ESEEEDKCKP…SCLRKKRKPQ (83 aa). A Phosphoserine modification is found at Ser601. Residues 605–615 show a composition bias toward basic and acidic residues; sequence DKCKPMSYEEK. Glycyl lysine isopeptide (Lys-Gly) (interchain with G-Cter in SUMO2) cross-links involve residues Lys645 and Lys694. The interval 674–1100 is disordered; sequence CLRKKRKPQA…PKKQELRAAS (427 aa). Residues 699–712 are compositionally biased toward low complexity; sequence SSSESESSSESSSS. Residues 724–744 are compositionally biased toward basic residues; it reads KSKKKGHPGREQKKHHHHHHQ. Pro residues-rich tracts occupy residues 751-785, 833-846, and 881-890; these read APVP…PPSM, PELP…PEHS, and PPKPARPPAV. Residues 926 to 936 are compositionally biased toward low complexity; sequence MQMQLYLQQLQ. Pro residues-rich tracts occupy residues 953 to 964, 973 to 996, and 1010 to 1034; these read QPPPPLPPPPHP, QPPP…PPRP, and QPPP…PQPA. A compositionally biased stretch (basic residues) spans 1041 to 1050; the sequence is QHHHSPRHHK. The C-terminal (CTD) region stretch occupies residues 1047-1362; the sequence is RHHKSDPYST…LLSIFEENLF (316 aa). Residue Lys1050 forms a Glycyl lysine isopeptide (Lys-Gly) (interchain with G-Cter in SUMO2) linkage. Residues 1071–1091 are compositionally biased toward polar residues; it reads PQMSQFQSLTHQSPPQQNVQP. Lys1111 carries the post-translational modification N6-acetyllysine; alternate. Residue Lys1111 forms a Glycyl lysine isopeptide (Lys-Gly) (interchain with G-Cter in SUMO1); alternate linkage. Lys1111 is covalently cross-linked (Glycyl lysine isopeptide (Lys-Gly) (interchain with G-Cter in SUMO2); alternate). Positions 1116-1339 are disordered; sequence HSPIIRSEPF…KREQERRRRE (224 aa). Phosphoserine occurs at positions 1117 and 1126. Residues 1175–1196 are compositionally biased toward basic and acidic residues; sequence PDKDKQKQEPKTPVAPKKDLKI. Lys1197 participates in a covalent cross-link: Glycyl lysine isopeptide (Lys-Gly) (interchain with G-Cter in SUMO2). Phosphoserine occurs at positions 1201 and 1204. Positions 1211–1223 are enriched in low complexity; it reads TTPSSTAKSSSDS. Residues 1225–1284 are compositionally biased toward basic and acidic residues; that stretch reads EQFRRAAREKEEREKALKAQAEHAEKEKERLRQERMRSREDEDALEQARRAHEEARRRQE. Residues 1285-1313 are compositionally biased toward low complexity; it reads QQQQQRQEQQQQQQQQAAAVAAAATPQAQ. Residues 1323 to 1339 are compositionally biased toward basic and acidic residues; that stretch reads QQRELARKREQERRRRE.

It belongs to the BET family. In terms of assembly, interacts with p53/TP53; the interaction is direct. Interacts (via CTD region) with CDK9 and CCNT1, acting as an associated component of P-TEFb complex. Interacts with RELA (when acetylated at 'Lys-310'). Interacts (via NET domain) with NSD3, CHD4, BICRA and ATAD5. The interaction with BICRA bridges BRD4 to the GBAF complex. Interacts (via NET domain) with JMJD6 (via JmjC and N-terminal domains); the interaction is stronger in presence of ssRNA and recruits JMJD6 on distal enhancers. Interacts with NSD3. Interacts with NIPBL. Interacts with SMC2. Interacts with NCAPD3. As to quaternary structure, (Microbial infection) Interacts with bovine papillomavirus type 1 regulatory protein E2. This interactions may serve for the tethering of viral genomes to host mitotic chromosomes allowing successful partitioning of the viral genome during cell division. In terms of assembly, (Microbial infection) Interacts with Epstein-Barr virus (EBV) protein EBNA1; this interaction facilitates transcriptional activation by EBNA1. (Microbial infection) Interacts with human herpes virus-8 (HHV-8) protein LANA. In terms of processing, phosphorylation by CK2 disrupt the intramolecular binding between the bromo domain 2 and the NPS region and promotes binding between the NPS and the BID regions, leading to activate the protein and promote binding to acetylated histones. In absence of phosphorylation, BRD4 does not localize to p53/TP53 target gene promoters, phosphorylation promoting recruitment to p53/TP53 target promoters. In terms of tissue distribution, ubiquitously expressed.

Its subcellular location is the nucleus. The protein resides in the chromosome. With respect to regulation, inhibited by JQ1, a thieno-triazolo-1,4-diazepine derivative, which specifically inhibits members of the BET family (BRD2, BRD3 and BRD4). The first bromo domain is inhibited by GSK778 (iBET-BD1), which specifically inhibits the first bromo domain of members of the BET family (BRD2, BRD3 and BRD4). The second bromo domain is inhibited by ABBV-744, which specifically inhibits the second bromo domain of members of the BET family (BRD2, BRD3 and BRD4). The second bromo domain is inhibited by GSK046 (iBET-BD2), which specifically inhibits the second bromo domain of members of the BET family (BRD2, BRD3 and BRD4). Its function is as follows. Chromatin reader protein that recognizes and binds acetylated histones and plays a key role in transmission of epigenetic memory across cell divisions and transcription regulation. Remains associated with acetylated chromatin throughout the entire cell cycle and provides epigenetic memory for postmitotic G1 gene transcription by preserving acetylated chromatin status and maintaining high-order chromatin structure. During interphase, plays a key role in regulating the transcription of signal-inducible genes by associating with the P-TEFb complex and recruiting it to promoters. Also recruits P-TEFb complex to distal enhancers, so called anti-pause enhancers in collaboration with JMJD6. BRD4 and JMJD6 are required to form the transcriptionally active P-TEFb complex by displacing negative regulators such as HEXIM1 and 7SKsnRNA complex from P-TEFb, thereby transforming it into an active form that can then phosphorylate the C-terminal domain (CTD) of RNA polymerase II. Regulates differentiation of naive CD4(+) T-cells into T-helper Th17 by promoting recruitment of P-TEFb to promoters. Promotes phosphorylation of 'Ser-2' of the C-terminal domain (CTD) of RNA polymerase II. According to a report, directly acts as an atypical protein kinase and mediates phosphorylation of 'Ser-2' of the C-terminal domain (CTD) of RNA polymerase II; these data however need additional evidences in vivo. In addition to acetylated histones, also recognizes and binds acetylated RELA, leading to further recruitment of the P-TEFb complex and subsequent activation of NF-kappa-B. Also acts as a regulator of p53/TP53-mediated transcription: following phosphorylation by CK2, recruited to p53/TP53 specific target promoters. In terms of biological role, acts as a chromatin insulator in the DNA damage response pathway. Inhibits DNA damage response signaling by recruiting the condensin-2 complex to acetylated histones, leading to chromatin structure remodeling, insulating the region from DNA damage response by limiting spreading of histone H2AX/H2A.x phosphorylation. The protein is Bromodomain-containing protein 4 (BRD4) of Homo sapiens (Human).